Consider the following 516-residue polypeptide: Amino-acid permease BAT1 (516 aa).

The next 12 helical transmembrane spans lie at 33–53 (LSVF…TGIT), 70–90 (YGWF…AEIC), 113–133 (PLAS…VTAS), 164–184 (VVIG…SLPI), 189–209 (FIGQ…MILI), 232–252 (LGIT…QYTI), 275–295 (GIIS…LGIS), 328–348 (FGSG…VFFC), 383–403 (VPIN…LTSL), 406–426 (IVAF…AYAI), 452–472 (VVGW…SLPV), and 483–503 (YTPV…LFSA).

The protein belongs to the amino acid-polyamine-organocation (APC) superfamily. Amino acid/choline transporter (ACT) (TC 2.A.3.4) family. As to expression, expressed in roots, rosette leaves, stems, cauline leaves, flowers and siliques.

It is found in the mitochondrion membrane. May play a role in primary carbon metabolism and plant growth, by mediating the transport of GABA from the cytosol to mitochondria. When expressed in a heterologous system (yeast), imports Arg and Ala across the plasma membrane and exports Lys and Glu, but does not transport proline. The chain is Amino-acid permease BAT1 (BAT1) from Arabidopsis thaliana (Mouse-ear cress).